Reading from the N-terminus, the 608-residue chain is Dihydroxyacetone kinase (608 aa).

The DhaK domain occupies 8-357 (YKKDLVLSHL…LDHKTSAPGW (350 aa)). Residues 53-56 (GSGH), Lys-105, and Asp-110 each bind substrate. Residue His-234 is the Tele-hemiaminal-histidine intermediate of the active site. One can recognise a DhaL domain in the interval 392–599 (KLYADLLESG…LAALISGITD (208 aa)). ATP contacts are provided by residues 421–424 (DGDC), 467–468 (TS), 523–524 (TL), and 584–586 (DPG).

This sequence belongs to the dihydroxyacetone kinase (DAK) family.

The protein localises to the cytoplasm. The catalysed reaction is dihydroxyacetone + ATP = dihydroxyacetone phosphate + ADP + H(+). The enzyme catalyses D-glyceraldehyde + ATP = D-glyceraldehyde 3-phosphate + ADP + H(+). It participates in polyol metabolism; glycerol fermentation; glycerone phosphate from glycerol (oxidative route): step 2/2. In terms of biological role, catalyzes both the phosphorylation of dihydroxyacetone and of glyceraldehyde. The protein is Dihydroxyacetone kinase (DAK) of Komagataella pastoris (Yeast).